Here is a 227-residue protein sequence, read N- to C-terminus: Zeamatin (227 aa).

An N-terminal signal peptide occupies residues 1–20 (MAGSVAIVGIFVALLAVAGE). 8 cysteine pairs are disulfide-bonded: Cys30–Cys226, Cys72–Cys82, Cys87–Cys93, Cys139–Cys215, Cys145–Cys198, Cys153–Cys163, Cys167–Cys176, and Cys177–Cys185.

It belongs to the thaumatin family.

In terms of biological role, has antifungal activity. Inhibits Candida albicans and Trichoderma reesei; marginal inhibition observed against Alternaria solani and Neurospora crassa. In Zea mays (Maize), this protein is Zeamatin (Zlp).